The following is a 183-amino-acid chain: uncharacterized protein (183 aa).

The protein to M.leprae ML2442.

This is an uncharacterized protein from Mycobacterium tuberculosis (strain CDC 1551 / Oshkosh).